The following is a 162-amino-acid chain: Ribosomal RNA large subunit methyltransferase H (162 aa).

Leu-78 and Gly-110 together coordinate S-adenosyl-L-methionine.

The protein belongs to the RNA methyltransferase RlmH family. In terms of assembly, homodimer.

The protein resides in the cytoplasm. It carries out the reaction pseudouridine(1915) in 23S rRNA + S-adenosyl-L-methionine = N(3)-methylpseudouridine(1915) in 23S rRNA + S-adenosyl-L-homocysteine + H(+). Its function is as follows. Specifically methylates the pseudouridine at position 1915 (m3Psi1915) in 23S rRNA. The polypeptide is Ribosomal RNA large subunit methyltransferase H (Bradyrhizobium sp. (strain ORS 278)).